We begin with the raw amino-acid sequence, 316 residues long: Large ribosomal subunit protein uL4 (316 aa).

The interval 1–211 (MASCVVKNWQ…EQLKARWGSD (211 aa)) is large ribosomal subunit protein uL4. Disordered stretches follow at residues 44-76 (ARQGNAHTKTRAEVRGGGRKPWKQKGTGRARAG) and 231-316 (EDQA…ESDD). Residues 60–71 (GGRKPWKQKGTG) show a composition bias toward basic residues. Positions 212–316 (AAPAVLETPS…TAPAEEESDD (105 aa)) are unknown. The segment covering 255–270 (QTPAQPEAQENQAALQ) has biased composition (low complexity). Composition is skewed to acidic residues over residues 281–291 (EQTEEPQDPAE) and 301–316 (TVEEAETAPAEEESDD).

It belongs to the universal ribosomal protein uL4 family. As to quaternary structure, part of the 50S ribosomal subunit.

One of the primary rRNA binding proteins, this protein initially binds near the 5'-end of the 23S rRNA. It is important during the early stages of 50S assembly. It makes multiple contacts with different domains of the 23S rRNA in the assembled 50S subunit and ribosome. In terms of biological role, forms part of the polypeptide exit tunnel. This Synechococcus sp. (strain JA-2-3B'a(2-13)) (Cyanobacteria bacterium Yellowstone B-Prime) protein is Large ribosomal subunit protein uL4.